The sequence spans 224 residues: Orotidine 5'-phosphate decarboxylase (224 aa).

Substrate is bound by residues Asp10, Lys32, 59-68 (DLKLHDIPNT), Thr115, Arg175, Gln184, Gly204, and Arg205. Lys61 functions as the Proton donor in the catalytic mechanism.

It belongs to the OMP decarboxylase family. Type 1 subfamily. As to quaternary structure, homodimer.

The enzyme catalyses orotidine 5'-phosphate + H(+) = UMP + CO2. Its pathway is pyrimidine metabolism; UMP biosynthesis via de novo pathway; UMP from orotate: step 2/2. Catalyzes the decarboxylation of orotidine 5'-monophosphate (OMP) to uridine 5'-monophosphate (UMP). This Erythrobacter litoralis (strain HTCC2594) protein is Orotidine 5'-phosphate decarboxylase.